Consider the following 468-residue polypeptide: Beta-monoglucosyldiacylglycerol synthase (468 aa).

The next 4 helical transmembrane spans lie at 51–71 (AALV…VSWG), 72–92 (SIFI…VVFA), 361–381 (FMLT…MAVV), and 387–407 (MLGP…FAGL).

The protein belongs to the glycosyltransferase 2 family. Requires Mg(2+) as cofactor.

Its subcellular location is the membrane. The enzyme catalyses a 1,2-diacyl-sn-glycerol + UDP-alpha-D-glucose = a 1,2-diacyl-3-O-(beta-D-glucopyranosyl)-sn-glycerol + UDP + H(+). In terms of biological role, glucosyltransferase involved in the biosynthesis of the non-bilayer-forming membrane lipid beta-monoglucosyldiacylglycerol which contributes to regulate the properties and stability of the membrane. Catalyzes the transfer of a glucosyl residue from UDP-Glc to diacylglycerol (DAG) acceptor to form the corresponding beta-glucosyl-DAG (1,2-diacyl-3-O-(beta-D-glucopyranosyl)-sn-glycerol). It can only use UDP-Glc as sugar donor. The sequence is that of Beta-monoglucosyldiacylglycerol synthase from Trichormus variabilis (strain ATCC 29413 / PCC 7937) (Anabaena variabilis).